A 205-amino-acid polypeptide reads, in one-letter code: Glycerol-3-phosphate acyltransferase (205 aa).

A run of 5 helical transmembrane segments spans residues 4–24 (IAPG…AILV), 80–100 (PFWL…PVFF), 107–127 (GVAT…GVMA), 130–150 (WLLT…SALI), and 155–175 (VWWF…LILL).

This sequence belongs to the PlsY family. Probably interacts with PlsX.

Its subcellular location is the cell inner membrane. It catalyses the reaction an acyl phosphate + sn-glycerol 3-phosphate = a 1-acyl-sn-glycero-3-phosphate + phosphate. Its pathway is lipid metabolism; phospholipid metabolism. Its function is as follows. Catalyzes the transfer of an acyl group from acyl-phosphate (acyl-PO(4)) to glycerol-3-phosphate (G3P) to form lysophosphatidic acid (LPA). This enzyme utilizes acyl-phosphate as fatty acyl donor, but not acyl-CoA or acyl-ACP. In Klebsiella pneumoniae subsp. pneumoniae (strain ATCC 700721 / MGH 78578), this protein is Glycerol-3-phosphate acyltransferase.